The primary structure comprises 201 residues: Guanylate kinase (201 aa).

The Guanylate kinase-like domain maps to 10-195 (GKIIILSGPS…CVEEVKNILK (186 aa)). 17–24 (GPSGVGKG) is a binding site for ATP.

It belongs to the guanylate kinase family.

The protein localises to the cytoplasm. The enzyme catalyses GMP + ATP = GDP + ADP. Functionally, essential for recycling GMP and indirectly, cGMP. This chain is Guanylate kinase, found in Mycoplasma mobile (strain ATCC 43663 / 163K / NCTC 11711) (Mesomycoplasma mobile).